Here is a 650-residue protein sequence, read N- to C-terminus: Aminopeptidase B (650 aa).

Residue serine 7 is modified to Phosphoserine. 298-302 lines the substrate pocket; that stretch reads GGMEN. Histidine 325 serves as a coordination point for Zn(2+). Glutamate 326 functions as the Proton acceptor in the catalytic mechanism. Zn(2+)-binding residues include histidine 329 and glutamate 348. Position 446 is an N6-acetyllysine (lysine 446).

Belongs to the peptidase M1 family. As to quaternary structure, monomer. It depends on Zn(2+) as a cofactor. Widely expressed.

It is found in the secreted. It carries out the reaction Release of N-terminal Arg and Lys from oligopeptides when P1' is not Pro. Also acts on arylamides of Arg and Lys.. In terms of biological role, exopeptidase which selectively removes arginine and/or lysine residues from the N-terminus of several peptide substrates including Arg(0)-Leu-enkephalin, Arg(0)-Met-enkephalin and Arg(-1)-Lys(0)-somatostatin-14. Can hydrolyze leukotriene A4 (LTA-4) into leukotriene B4 (LTB-4). The sequence is that of Aminopeptidase B (Rnpep) from Rattus norvegicus (Rat).